Reading from the N-terminus, the 99-residue chain is A-type ATP synthase subunit F (99 aa).

This sequence belongs to the V-ATPase F subunit family. As to quaternary structure, has multiple subunits with at least A(3), B(3), C, D, E, F, H, I and proteolipid K(x).

The protein localises to the cell membrane. Component of the A-type ATP synthase that produces ATP from ADP in the presence of a proton gradient across the membrane. This is A-type ATP synthase subunit F from Methanothrix thermoacetophila (strain DSM 6194 / JCM 14653 / NBRC 101360 / PT) (Methanosaeta thermophila).